The sequence spans 494 residues: BUB3-interacting and GLEBS motif-containing protein ZNF207 (494 aa).

Positions 1–92 (MGRKKKKQLK…EGIPEKDMDE (92 aa)) are microtubule-binding region. 2 consecutive C2H2-type zinc fingers follow at residues 11 to 34 (PWCW…KAKH) and 35 to 58 (FKCH…MQVH). Residues 100–111 (KTQESQKKKQQD) are compositionally biased toward basic and acidic residues. Disordered stretches follow at residues 100–161 (KTQE…PGIP), 250–377 (NRPP…SATS), and 455–494 (LPGA…GGRY). Over residues 112–121 (DSDEYDDDDS) the composition is skewed to acidic residues. The span at 127 to 136 (FQPQPVQPQQ) shows a compositional bias: polar residues. Positions 142–161 (MAQPGLPPVPGAPGMPPGIP) are enriched in pro residues. Residues 283–300 (SSSTASSNSESLSASSKA) show a composition bias toward low complexity. The span at 323–332 (LNSTPATSTE) shows a compositional bias: polar residues. A compositionally biased stretch (low complexity) spans 342 to 377 (TQSTASTTSTTNSTAAKPAASITSKPATLTTTSATS). The GLEBS stretch occupies residues 375–407 (ATSKLIHPDEDISLEERRAQLPKYQRNLPRPGQ). Residues 463–483 (GQGPPMVPPYQGGPPRPPMGM) show a composition bias toward pro residues.

In terms of assembly, interacts (via GLEBS region) with BUB3.

The protein localises to the nucleus. Its subcellular location is the chromosome. It localises to the centromere. The protein resides in the kinetochore. It is found in the cytoplasm. The protein localises to the cytoskeleton. Its subcellular location is the spindle. Its function is as follows. Kinetochore- and microtubule-binding protein that plays a key role in spindle assembly. ZNF207/BuGZ is mainly composed of disordered low-complexity regions and undergoes phase transition or coacervation to form temperature-dependent liquid droplets. Coacervation promotes microtubule bundling and concentrates tubulin, promoting microtubule polymerization and assembly of spindle and spindle matrix by concentrating its building blocks. Also acts as a regulator of mitotic chromosome alignment by mediating the stability and kinetochore loading of BUB3. Mechanisms by which BUB3 is protected are unclear: according to a first report, ZNF207/BuGZ may act by blocking ubiquitination and proteasomal degradation of BUB3. According to another report, the stabilization is independent of the proteasome. The sequence is that of BUB3-interacting and GLEBS motif-containing protein ZNF207 from Pongo abelii (Sumatran orangutan).